The sequence spans 242 residues: Adenosylcobinamide-GDP ribazoletransferase (242 aa).

5 helical membrane-spanning segments follow: residues 31–51 (LLFYPVVGVLFGVLLWALSTA), 52–72 (LMGAPLLLHAALLLTAWVLLS), 109–129 (IAVVTLGLVLLLKFTALVALI), 134–154 (GAALILAPLIGRASMLALFLT), and 188–208 (ILIGGFSGGVAVLLAAICFIG).

It belongs to the CobS family. It depends on Mg(2+) as a cofactor.

It localises to the cell inner membrane. It catalyses the reaction alpha-ribazole + adenosylcob(III)inamide-GDP = adenosylcob(III)alamin + GMP + H(+). The catalysed reaction is alpha-ribazole 5'-phosphate + adenosylcob(III)inamide-GDP = adenosylcob(III)alamin 5'-phosphate + GMP + H(+). It functions in the pathway cofactor biosynthesis; adenosylcobalamin biosynthesis; adenosylcobalamin from cob(II)yrinate a,c-diamide: step 7/7. Its function is as follows. Joins adenosylcobinamide-GDP and alpha-ribazole to generate adenosylcobalamin (Ado-cobalamin). Also synthesizes adenosylcobalamin 5'-phosphate from adenosylcobinamide-GDP and alpha-ribazole 5'-phosphate. The polypeptide is Adenosylcobinamide-GDP ribazoletransferase (Pseudomonas fluorescens (strain SBW25)).